A 122-amino-acid chain; its full sequence is Large ribosomal subunit protein uL14 (122 aa).

The protein belongs to the universal ribosomal protein uL14 family. As to quaternary structure, part of the 50S ribosomal subunit. Forms a cluster with proteins L3 and L19. In the 70S ribosome, L14 and L19 interact and together make contacts with the 16S rRNA in bridges B5 and B8.

In terms of biological role, binds to 23S rRNA. Forms part of two intersubunit bridges in the 70S ribosome. This Stutzerimonas stutzeri (strain A1501) (Pseudomonas stutzeri) protein is Large ribosomal subunit protein uL14.